A 1190-amino-acid chain; its full sequence is Pumilio homolog 1 (1190 aa).

4 disordered regions span residues 38 to 74, 491 to 531, 611 to 675, and 744 to 777; these read LTSG…GVAG, SNSA…QQTD, ANGP…NSSL, and GPVG…LNLG. 4 stretches are compositionally biased toward low complexity: residues 491–508, 518–531, 628–675, and 765–777; these read SNSA…GQQQ, PLTP…QQTD, QQPQ…NSSL, and LSSH…LNLG. The PUM-HD domain occupies 830–1172; the sequence is GRSRLLEDFR…HILAKLEKYY (343 aa). 8 Pumilio repeats span residues 850-885, 886-921, 922-959, 960-995, 996-1031, 1032-1067, 1068-1103, and 1107-1146; these read EIAG…LVFN, EILQ…ALAE, RIRG…EMVR, ELDG…FIID, AFKS…PILE, ELHQ…KIVA, EIRG…MLID, and TMND…IVMH. Residues 865–869 form an adenine-nucleotide binding in RNA target region; it reads SRFIQ. The uracil-nucleotide binding in RNA target stretch occupies residues 901 to 905; sequence NYVIQ. An adenine-nucleotide binding in RNA target region spans residues 937–941; the sequence is CRVIQ. The interval 975-979 is non-specific-nucleotide binding in RNA target; the sequence is NHVVQ. Positions 1011 to 1015 are adenine-nucleotide binding in RNA target; it reads CRVIQ. Residues 1047–1051 form a uracil-nucleotide binding in RNA target region; it reads NYVIQ. Positions 1083–1087 are guanine-nucleotide binding in RNA target; sequence SNVVE. A uracil-nucleotide binding in RNA target region spans residues 1126–1130; it reads NYVVQ.

As to quaternary structure, interacts with cpeb1-a; interacts with unphosphorylated cpeb1-a but not phosphorylated. Component of a complex with papd4, sympk, tacc3, parn, dazl and cpeb1. Post-translationally, phosphorylated. Phosphorylation takes place at the time of dissociation of cpeb1-a from pum1 and the translational activation of ccnb1 mRNA. Present in oocytes (at protein level).

It is found in the cytoplasm. The protein localises to the P-body. It localises to the cytoplasmic granule. In terms of biological role, sequence-specific RNA-binding protein that acts as a post-transcriptional repressor by binding the 3'-UTR of mRNA targets. Binds to an RNA consensus sequence, the Pumilio Response Element (PRE), 5'-UGUANAUA-3', that is related to the Nanos Response Element (NRE). Mediates post-transcriptional repression of transcripts via different mechanisms: acts via direct recruitment of deadenylase complexes leading to translational inhibition and mRNA degradation. Also mediates deadenylation-independent repression by promoting accessibility of miRNAs. Acts as a post-transcriptional repressor of ccnb1 mRNA during oocyte maturation. This chain is Pumilio homolog 1, found in Xenopus laevis (African clawed frog).